We begin with the raw amino-acid sequence, 145 residues long: UPF0735 ACT domain-containing protein CLL_A2896 (145 aa).

An ACT domain is found at 69–144; the sequence is TFNLIVKDQT…YVEKIEFVAM (76 aa).

Belongs to the UPF0735 family.

In Clostridium botulinum (strain Eklund 17B / Type B), this protein is UPF0735 ACT domain-containing protein CLL_A2896.